Here is a 313-residue protein sequence, read N- to C-terminus: Porphobilinogen deaminase (313 aa).

The residue at position 242 (cysteine 242) is an S-(dipyrrolylmethanemethyl)cysteine.

It belongs to the HMBS family. As to quaternary structure, monomer. Dipyrromethane is required as a cofactor.

It carries out the reaction 4 porphobilinogen + H2O = hydroxymethylbilane + 4 NH4(+). The protein operates within porphyrin-containing compound metabolism; protoporphyrin-IX biosynthesis; coproporphyrinogen-III from 5-aminolevulinate: step 2/4. Its function is as follows. Tetrapolymerization of the monopyrrole PBG into the hydroxymethylbilane pre-uroporphyrinogen in several discrete steps. The chain is Porphobilinogen deaminase from Escherichia coli (strain SE11).